We begin with the raw amino-acid sequence, 121 residues long: Protein PilH (121 aa).

A Response regulatory domain is found at 3–119 (RILIVDDSPT…TLLKTINAVL (117 aa)). Asp-52 carries the 4-aspartylphosphate modification.

May be a part of a signal-transduction system that regulates twitching motility by controlling pilus function (extension and retraction). The chain is Protein PilH (pilH) from Pseudomonas aeruginosa (strain ATCC 15692 / DSM 22644 / CIP 104116 / JCM 14847 / LMG 12228 / 1C / PRS 101 / PAO1).